Reading from the N-terminus, the 191-residue chain is MEAQVFLASGSPRRKELLTQLGYQFDVLSVDVEEIHQEHETPLMYVERLSKDKAQAGVKAIEKTKNKYTPVLGSDTIVVIDGVILEKPKDFKDAKRMLLALSGRQHQVMTAVTIATPEKIRTKTVITQVWFKTLSEQEIEQYWESGEPCDKAGSYGIQGSGGRFVSRIDGSYHAVMGLPLMETDQLLHQFL.

The Proton acceptor role is filled by Asp-75.

The protein belongs to the Maf family. YhdE subfamily. Requires a divalent metal cation as cofactor.

The protein resides in the cytoplasm. It catalyses the reaction dTTP + H2O = dTMP + diphosphate + H(+). It carries out the reaction UTP + H2O = UMP + diphosphate + H(+). Nucleoside triphosphate pyrophosphatase that hydrolyzes dTTP and UTP. May have a dual role in cell division arrest and in preventing the incorporation of modified nucleotides into cellular nucleic acids. The protein is dTTP/UTP pyrophosphatase of Aliivibrio fischeri (strain ATCC 700601 / ES114) (Vibrio fischeri).